The primary structure comprises 205 residues: Phosphoheptose isomerase (205 aa).

In terms of domain architecture, SIS spans 38–200 (LAVRLALGSK…LFEAVGELEP (163 aa)). Residue 53–55 (NGG) participates in substrate binding. 2 residues coordinate Zn(2+): His62 and Glu66. Substrate is bound by residues Glu66, 95 to 96 (ND), 121 to 123 (STS), Ser126, and Gln173. The Zn(2+) site is built by Gln173 and His181.

This sequence belongs to the SIS family. GmhA subfamily. In terms of assembly, homotetramer. Zn(2+) serves as cofactor.

It localises to the cytoplasm. The enzyme catalyses 2 D-sedoheptulose 7-phosphate = D-glycero-alpha-D-manno-heptose 7-phosphate + D-glycero-beta-D-manno-heptose 7-phosphate. Its pathway is carbohydrate biosynthesis; D-glycero-D-manno-heptose 7-phosphate biosynthesis; D-glycero-alpha-D-manno-heptose 7-phosphate and D-glycero-beta-D-manno-heptose 7-phosphate from sedoheptulose 7-phosphate: step 1/1. Its function is as follows. Catalyzes the isomerization of sedoheptulose 7-phosphate in D-glycero-D-manno-heptose 7-phosphate. The protein is Phosphoheptose isomerase of Maridesulfovibrio salexigens (strain ATCC 14822 / DSM 2638 / NCIMB 8403 / VKM B-1763) (Desulfovibrio salexigens).